The primary structure comprises 58 residues: MMSSSQIIVCNKINIFVCKYNLLQINFTLNQSVFVFVVRSSNLVFQPLGMVKMRRSNC.

Its function is as follows. Stimulates the expression of 39k gene most probably by increasing IE1 expression. In Lepidoptera (butterflies and moths), this protein is Transactivator protein ORF121 (AC121).